The primary structure comprises 156 residues: C-type lectin lectoxin-Phi2 (156 aa).

Residues 1-23 (MGRFIFVSLGLLVLAFSLSGIGA) form the signal peptide. 3 disulfides stabilise this stretch: cysteine 27/cysteine 38, cysteine 55/cysteine 154, and cysteine 129/cysteine 146. The region spanning 34–155 (HNVSCYKLIN…CNRRHRFLCK (122 aa)) is the C-type lectin domain. N-linked (GlcNAc...) asparagine glycosylation is found at asparagine 35 and asparagine 109. Positions 119-121 (EPN) match the Mannose-binding motif. Glutamate 127, asparagine 142, and aspartate 143 together coordinate Ca(2+).

It belongs to the true venom lectin family. In terms of tissue distribution, expressed by the venom gland.

It localises to the secreted. Functionally, mannose-binding lectin which recognizes specific carbohydrate structures and agglutinates a variety of animal cells by binding to cell-surface glycoproteins and glycolipids. May be a calcium-dependent lectin. The sequence is that of C-type lectin lectoxin-Phi2 from Philodryas olfersii (Green snake).